The following is a 360-amino-acid chain: MSDIDQLNTSLLAEIAAADDETALEAVRVSALGKKGSVSELLKTLGAMTPEERQSKGAAINVLKNAVTEALTARKTTLRQAAIDARLQAETVDVSLPVRSSPAERGRIHPISQIVDEITAIFADMGFSIAEGPDIETDYYNFTALNFPEGHPAREMHDTFFFNPDENGERKVLRTHTSPVQVRTMEAQTPPIRIIIPGKTYRQDSDATHSPMFHQVEGLVVDKKANVANLRWVLEEFCKTFFEVDSVTMRFRPSFFPFTEPSFEVDIQCDRSGPIVKFGEGTDWMEILGCGMVHPNVLRYGGLDPDEYQGFAWGMGLDRIAMLKYGMPDLRDFFNADVRWMTHYGFRPLDMPTLFGGLSA.

Glu-260 is a binding site for Mg(2+).

The protein belongs to the class-II aminoacyl-tRNA synthetase family. Phe-tRNA synthetase alpha subunit type 1 subfamily. Tetramer of two alpha and two beta subunits. It depends on Mg(2+) as a cofactor.

It is found in the cytoplasm. It catalyses the reaction tRNA(Phe) + L-phenylalanine + ATP = L-phenylalanyl-tRNA(Phe) + AMP + diphosphate + H(+). In Rhizobium johnstonii (strain DSM 114642 / LMG 32736 / 3841) (Rhizobium leguminosarum bv. viciae), this protein is Phenylalanine--tRNA ligase alpha subunit.